Here is a 102-residue protein sequence, read N- to C-terminus: Large ribosomal subunit protein uL24 (102 aa).

The protein belongs to the universal ribosomal protein uL24 family. In terms of assembly, part of the 50S ribosomal subunit.

Its function is as follows. One of two assembly initiator proteins, it binds directly to the 5'-end of the 23S rRNA, where it nucleates assembly of the 50S subunit. Functionally, one of the proteins that surrounds the polypeptide exit tunnel on the outside of the subunit. In Leuconostoc citreum (strain KM20), this protein is Large ribosomal subunit protein uL24.